The following is a 116-amino-acid chain: Large ribosomal subunit protein bL17 (116 aa).

This sequence belongs to the bacterial ribosomal protein bL17 family. As to quaternary structure, part of the 50S ribosomal subunit. Contacts protein L32.

This Synechococcus sp. (strain WH7803) protein is Large ribosomal subunit protein bL17.